Here is a 334-residue protein sequence, read N- to C-terminus: MISRVENISQPQFYNHNKIWTKPFIIAIIVVIILGIISLFTGVYDIRGQEDGMEMFFITRVPRTVALMLTGAAMAMAGLVMQLITQNRFVEPTTTGTIEWSSLGLLFVYLLFPAPTLVQRMTGAIIFSFIGTMIFFLFLRRVKLRSSLIVPIIGLMLGAVISAVSTFLGLLFQMTQSIETWFVGSFANIQVGRYEYLWLIVIVTLLIFMYANRLTLAGLGEDVATSLGVNYNRIVLFGTALISVAVGIVAAVIGNLPFLGLIVPNIVSMFRGDDLRSNLPWVCVIGMGTITACDIISRTIIKPFELPVSLILASVGAVVFITILLRKRKPRRLR.

Helical transmembrane passes span 24-44 (FIIA…TGVY), 64-84 (TVAL…MQLI), 98-118 (IEWS…PTLV), 119-139 (QRMT…FLFL), 152-172 (IIGL…GLLF), 197-217 (LWLI…LTLA), 234-254 (IVLF…AVIG), 277-297 (SNLP…DIIS), and 304-324 (FELP…ITIL).

The protein belongs to the binding-protein-dependent transport system permease family. FecCD subfamily. As to quaternary structure, the complex is composed of two ATP-binding proteins (FatE), two transmembrane proteins (FatC and FatD) and a solute-binding protein (FpuA).

The protein resides in the cell membrane. Functionally, part of an ABC transporter complex involved in ferric-petrobactin uptake. Probably responsible for the translocation of the substrate across the membrane. The sequence is that of Petrobactin import system permease protein FatD from Bacillus anthracis.